Consider the following 192-residue polypeptide: UPF0312 protein YE1254 (192 aa).

A signal peptide spans 1–23 (MFNKTLLGLTVGALMFTAGSAVA).

It belongs to the UPF0312 family. Type 1 subfamily.

It localises to the periplasm. This Yersinia enterocolitica serotype O:8 / biotype 1B (strain NCTC 13174 / 8081) protein is UPF0312 protein YE1254.